A 201-amino-acid polypeptide reads, in one-letter code: Recombination protein RecR (201 aa).

A C4-type zinc finger spans residues 57–72; that stretch reads CADCRTFTEQEICTIC. In terms of domain architecture, Toprim spans 81 to 176; the sequence is GLICVVESPA…DASRIAHGVP (96 aa).

This sequence belongs to the RecR family.

Functionally, may play a role in DNA repair. It seems to be involved in an RecBC-independent recombinational process of DNA repair. It may act with RecF and RecO. This Erwinia tasmaniensis (strain DSM 17950 / CFBP 7177 / CIP 109463 / NCPPB 4357 / Et1/99) protein is Recombination protein RecR.